A 427-amino-acid chain; its full sequence is Flotillin-1 (427 aa).

A phosphoserine mark is found at S19, S163, and S385. T387 is subject to Phosphothreonine.

This sequence belongs to the band 7/mec-2 family. Flotillin subfamily. As to quaternary structure, heterooligomeric complex of flotillin-1 and flotillin-2 and caveolin-1 and caveolin-2. Interacts with ECPAS.

The protein localises to the cell membrane. Its subcellular location is the endosome. The protein resides in the membrane. It localises to the caveola. It is found in the melanosome. The protein localises to the membrane raft. Functionally, may act as a scaffolding protein within caveolar membranes, functionally participating in formation of caveolae or caveolae-like vesicles. The protein is Flotillin-1 (FLOT1) of Homo sapiens (Human).